The following is a 208-amino-acid chain: Pyridoxal 5'-phosphate synthase subunit PdxT (208 aa).

L-glutamine is bound at residue 46–48 (GES). The Nucleophile role is filled by Cys78. L-glutamine contacts are provided by residues Arg105 and 156-157 (IR). Residues His192 and Glu194 each act as charge relay system in the active site.

This sequence belongs to the glutaminase PdxT/SNO family. In terms of assembly, in the presence of PdxS, forms a dodecamer of heterodimers. Only shows activity in the heterodimer.

The catalysed reaction is aldehydo-D-ribose 5-phosphate + D-glyceraldehyde 3-phosphate + L-glutamine = pyridoxal 5'-phosphate + L-glutamate + phosphate + 3 H2O + H(+). It catalyses the reaction L-glutamine + H2O = L-glutamate + NH4(+). Its pathway is cofactor biosynthesis; pyridoxal 5'-phosphate biosynthesis. Its function is as follows. Catalyzes the hydrolysis of glutamine to glutamate and ammonia as part of the biosynthesis of pyridoxal 5'-phosphate. The resulting ammonia molecule is channeled to the active site of PdxS. This Bifidobacterium adolescentis (strain ATCC 15703 / DSM 20083 / NCTC 11814 / E194a) protein is Pyridoxal 5'-phosphate synthase subunit PdxT.